The sequence spans 422 residues: Tyrosine--tRNA ligase (422 aa).

An L-tyrosine-binding site is contributed by Y34. Residues 39 to 48 (PTEDSLHVGH) carry the 'HIGH' region motif. Y172 and Q176 together coordinate L-tyrosine. Positions 232–236 (KFGKT) match the 'KMSKS' region motif. K235 is an ATP binding site. Residues 354 to 412 (KDLQEALVLSSLAQSRTQAKNMIISNSISINTKKIVNKNYIIDDNDKLFNQFTLLSRGK) form the S4 RNA-binding domain.

It belongs to the class-I aminoacyl-tRNA synthetase family. TyrS type 1 subfamily. Homodimer.

It localises to the cytoplasm. The enzyme catalyses tRNA(Tyr) + L-tyrosine + ATP = L-tyrosyl-tRNA(Tyr) + AMP + diphosphate + H(+). Its function is as follows. Catalyzes the attachment of tyrosine to tRNA(Tyr) in a two-step reaction: tyrosine is first activated by ATP to form Tyr-AMP and then transferred to the acceptor end of tRNA(Tyr). The polypeptide is Tyrosine--tRNA ligase (Buchnera aphidicola subsp. Schizaphis graminum (strain Sg)).